Consider the following 138-residue polypeptide: Large ribosomal subunit protein mL43 (138 aa).

It belongs to the mitochondrion-specific ribosomal protein mL43 family. In terms of assembly, component of the mitochondrial large ribosomal subunit (mt-LSU). Mature N.crassa 74S mitochondrial ribosomes consist of a small (37S) and a large (54S) subunit. The 37S small subunit contains a 16S ribosomal RNA (16S mt-rRNA) and 32 different proteins. The 54S large subunit contains a 23S rRNA (23S mt-rRNA) and 42 different proteins.

It localises to the mitochondrion. Component of the mitochondrial ribosome (mitoribosome), a dedicated translation machinery responsible for the synthesis of mitochondrial genome-encoded proteins, including at least some of the essential transmembrane subunits of the mitochondrial respiratory chain. The mitoribosomes are attached to the mitochondrial inner membrane and translation products are cotranslationally integrated into the membrane. This chain is Large ribosomal subunit protein mL43 (mrpl51), found in Neurospora crassa (strain ATCC 24698 / 74-OR23-1A / CBS 708.71 / DSM 1257 / FGSC 987).